Consider the following 414-residue polypeptide: Heterogeneous nuclear ribonucleoprotein F (414 aa).

Met1 carries the N-acetylmethionine modification. Met2 bears the N-acetylmethionine; in Heterogeneous nuclear ribonucleoprotein F, N-terminally processed mark. An RRM 1 domain is found at 11 to 90; the sequence is FVVKLRGLPW…RYIEVFKSHR (80 aa). Lys72 participates in a covalent cross-link: Glycyl lysine isopeptide (Lys-Gly) (interchain with G-Cter in SUMO). Positions 81–86 are interaction with RNA; the sequence is RYIEVF. Lys87 is covalently cross-linked (Glycyl lysine isopeptide (Lys-Gly) (interchain with G-Cter in SUMO2)). Ser104 and Ser161 each carry phosphoserine. The 78-residue stretch at 111–188 folds into the RRM 2 domain; that stretch reads GFVRLRGLPF…RYIEVFKSSQ (78 aa). Lys167 is covalently cross-linked (Glycyl lysine isopeptide (Lys-Gly) (interchain with G-Cter in SUMO2)). The interaction with RNA stretch occupies residues 179-184; that stretch reads RYIEVF. Lys185 participates in a covalent cross-link: Glycyl lysine isopeptide (Lys-Gly) (interchain with G-Cter in SUMO2). A phosphoserine mark is found at Ser187, Ser193, and Ser195. Lys200 bears the N6-acetyllysine; alternate mark. Residue Lys200 forms a Glycyl lysine isopeptide (Lys-Gly) (interchain with G-Cter in SUMO2); alternate linkage. Thr215 is modified (phosphothreonine). N6-acetyllysine; alternate is present on Lys224. Lys224 participates in a covalent cross-link: Glycyl lysine isopeptide (Lys-Gly) (interchain with G-Cter in SUMO2); alternate. At Ser265 the chain carries Phosphoserine. In terms of domain architecture, RRM 3 spans 289–366; that stretch reads HCVHMRGLPY…IELFLNSTTG (78 aa). The segment at 355-360 is interaction with RNA; that stretch reads RYIELF.

As to quaternary structure, identified in the spliceosome C complex. Interacts with AGO1, AGO2, TBP and TXNL4/DIM1. Sumoylated.

Its subcellular location is the nucleus. It localises to the nucleoplasm. Functionally, component of the heterogeneous nuclear ribonucleoprotein (hnRNP) complexes which provide the substrate for the processing events that pre-mRNAs undergo before becoming functional, translatable mRNAs in the cytoplasm. Plays a role in the regulation of alternative splicing events. Binds G-rich sequences in pre-mRNAs and keeps target RNA in an unfolded state. This Bos taurus (Bovine) protein is Heterogeneous nuclear ribonucleoprotein F (HNRNPF).